The sequence spans 132 residues: Interleukin-5 (132 aa).

Residues 1-19 (MRMLLHLSILTLACVWTFA) form the signal peptide. Residues Asn45, Asn74, and Asn88 are each glycosylated (N-linked (GlcNAc...) asparagine).

The protein belongs to the IL-5 family. Homodimer; disulfide-linked. Interacts with IL5RA. Interacts with CSF2RB.

It is found in the secreted. Its function is as follows. Homodimeric cytokine expressed predominantly by T-lymphocytes and NK cells that plays an important role in the survival, differentiation, and chemotaxis of eosinophils. Also acts on activated and resting B-cells to induce immunoglobulin production, growth, and differentiation. Mechanistically, exerts its biological effects through a receptor composed of IL5RA subunit and the cytokine receptor common subunit beta/CSF2RB. Binding to the receptor leads to activation of various kinases including LYN, SYK and JAK2 and thereby propagates signals through the RAS-MAPK and JAK-STAT5 pathways respectively. This chain is Interleukin-5 (IL5), found in Sigmodon hispidus (Hispid cotton rat).